A 413-amino-acid polypeptide reads, in one-letter code: Alpha-1-antitrypsin 1-5 (413 aa).

Residues 1-24 (MTPSISWCLLLLAGLCCLVPSFLA) form the signal peptide. Residues Asn-64, Asn-101, and Asn-265 are each glycosylated (N-linked (GlcNAc...) asparagine). The interval 368-387 (AATVLQGGFLSMPPILHFNR) is RCL.

The protein belongs to the serpin family.

It localises to the secreted. In terms of biological role, does not inhibit elastase or chymotrypsin. No target protease has been identified to date. The polypeptide is Alpha-1-antitrypsin 1-5 (Serpina1e) (Mus musculus (Mouse)).